The chain runs to 380 residues: Cytochrome b (380 aa).

Helical transmembrane passes span 34 to 54 (FGSL…LLAM), 78 to 99 (WLIR…YMHI), 114 to 134 (WNTG…GYVL), and 179 to 199 (FFAL…IHLT). Heme b-binding residues include His-84 and His-98. The heme b site is built by His-183 and His-197. An a ubiquinone-binding site is contributed by His-202. 4 helical membrane passes run 227 to 247 (LKDI…ALFS), 289 to 309 (LGGV…PFLH), 321 to 341 (LSQS…WIGS), and 348 to 368 (FIII…ILFP).

Belongs to the cytochrome b family. In terms of assembly, the cytochrome bc1 complex contains 11 subunits: 3 respiratory subunits (MT-CYB, CYC1 and UQCRFS1), 2 core proteins (UQCRC1 and UQCRC2) and 6 low-molecular weight proteins (UQCRH/QCR6, UQCRB/QCR7, UQCRQ/QCR8, UQCR10/QCR9, UQCR11/QCR10 and a cleavage product of UQCRFS1). This cytochrome bc1 complex then forms a dimer. Requires heme b as cofactor.

The protein resides in the mitochondrion inner membrane. Its function is as follows. Component of the ubiquinol-cytochrome c reductase complex (complex III or cytochrome b-c1 complex) that is part of the mitochondrial respiratory chain. The b-c1 complex mediates electron transfer from ubiquinol to cytochrome c. Contributes to the generation of a proton gradient across the mitochondrial membrane that is then used for ATP synthesis. This is Cytochrome b (MT-CYB) from Oceanodroma tristrami (Tristram's storm-petrel).